The following is a 235-amino-acid chain: 2-C-methyl-D-erythritol 4-phosphate cytidylyltransferase (235 aa).

This sequence belongs to the IspD/TarI cytidylyltransferase family. IspD subfamily.

The catalysed reaction is 2-C-methyl-D-erythritol 4-phosphate + CTP + H(+) = 4-CDP-2-C-methyl-D-erythritol + diphosphate. It functions in the pathway isoprenoid biosynthesis; isopentenyl diphosphate biosynthesis via DXP pathway; isopentenyl diphosphate from 1-deoxy-D-xylulose 5-phosphate: step 2/6. Its function is as follows. Catalyzes the formation of 4-diphosphocytidyl-2-C-methyl-D-erythritol from CTP and 2-C-methyl-D-erythritol 4-phosphate (MEP). The protein is 2-C-methyl-D-erythritol 4-phosphate cytidylyltransferase of Pseudomonas fluorescens (strain Pf0-1).